Reading from the N-terminus, the 362-residue chain is MSMDVTFLGTGAAYPSPTRGASAVVLRCEGECWLFDCGEGTQTQLMKSQLKAGRITKIFITHLHGDHFFGLPGLLCTISLQSGSVVARQPIEIYGPVGLRDFIWRTMELSHTELVFPYVVHELVPTADQCPVEELREFAHMDETDSSPKGQGRTILLDAEENSYCLVDDEQFVVKAFRLFHRIPSFGFSVVEKKRAGKLNAQKLRDLGVPPGPAYGKLKNGISVVLDNGVTISPQDVLKKPMVGRKVCILGDCSGVVGDGGVKLCFEADLLIHEATLDDSQMDKAREHGHSTPQMAAAFAKLCRAKRLVLTHFSQRYKPTALAREGEADGIAELRKQAEAVLELQEVTLAEDFMVIGIPIKK.

The Zn(2+) site is built by histidine 62, histidine 64, aspartate 66, histidine 67, histidine 181, aspartate 252, and histidine 312. The Proton acceptor role is filled by aspartate 66.

The protein belongs to the RNase Z family. As to quaternary structure, homodimer. Zn(2+) serves as cofactor.

It localises to the cytoplasm. Its subcellular location is the cytosol. The protein localises to the nucleus. The enzyme catalyses Endonucleolytic cleavage of RNA, removing extra 3' nucleotides from tRNA precursor, generating 3' termini of tRNAs. A 3'-hydroxy group is left at the tRNA terminus and a 5'-phosphoryl group is left at the trailer molecule.. In terms of biological role, zinc phosphodiesterase, which displays some tRNA 3'-processing endonuclease activity. Specifically involved in tRNA repair: acts downstream of the ribosome-associated quality control (RQC) pathway by removing a 2',3'-cyclic phosphate from tRNAs following cleavage by ANKZF1. tRNAs are then processed by TRNT1. This Mus musculus (Mouse) protein is Zinc phosphodiesterase ELAC protein 1 (Elac1).